The sequence spans 275 residues: Dermonecrotic toxin SpeSicTox-betaIIA3ii (275 aa).

Residue H5 is part of the active site. Residues E25 and D27 each coordinate Mg(2+). H41 serves as the catalytic Nucleophile. Disulfide bonds link C45/C51 and C47/C190. Position 85 (D85) interacts with Mg(2+).

The protein belongs to the arthropod phospholipase D family. Class II subfamily. It depends on Mg(2+) as a cofactor. Expressed by the venom gland.

The protein resides in the secreted. It catalyses the reaction an N-(acyl)-sphingosylphosphocholine = an N-(acyl)-sphingosyl-1,3-cyclic phosphate + choline. It carries out the reaction an N-(acyl)-sphingosylphosphoethanolamine = an N-(acyl)-sphingosyl-1,3-cyclic phosphate + ethanolamine. The catalysed reaction is a 1-acyl-sn-glycero-3-phosphocholine = a 1-acyl-sn-glycero-2,3-cyclic phosphate + choline. The enzyme catalyses a 1-acyl-sn-glycero-3-phosphoethanolamine = a 1-acyl-sn-glycero-2,3-cyclic phosphate + ethanolamine. Functionally, dermonecrotic toxins cleave the phosphodiester linkage between the phosphate and headgroup of certain phospholipids (sphingolipid and lysolipid substrates), forming an alcohol (often choline) and a cyclic phosphate. This toxin acts on sphingomyelin (SM). It may also act on ceramide phosphoethanolamine (CPE), lysophosphatidylcholine (LPC) and lysophosphatidylethanolamine (LPE), but not on lysophosphatidylserine (LPS), and lysophosphatidylglycerol (LPG). It acts by transphosphatidylation, releasing exclusively cyclic phosphate products as second products. Induces dermonecrosis, hemolysis, increased vascular permeability, edema, inflammatory response, and platelet aggregation. The protein is Dermonecrotic toxin SpeSicTox-betaIIA3ii of Sicarius peruensis (Six-eyed sand spider).